The following is an 89-amino-acid chain: Small ribosomal subunit protein uS15 (89 aa).

It belongs to the universal ribosomal protein uS15 family. Part of the 30S ribosomal subunit. Forms a bridge to the 50S subunit in the 70S ribosome, contacting the 23S rRNA.

In terms of biological role, one of the primary rRNA binding proteins, it binds directly to 16S rRNA where it helps nucleate assembly of the platform of the 30S subunit by binding and bridging several RNA helices of the 16S rRNA. Functionally, forms an intersubunit bridge (bridge B4) with the 23S rRNA of the 50S subunit in the ribosome. The polypeptide is Small ribosomal subunit protein uS15 (Prochlorococcus marinus subsp. pastoris (strain CCMP1986 / NIES-2087 / MED4)).